The chain runs to 320 residues: ATP-dependent 6-phosphofructokinase (320 aa).

Residue Gly-12 coordinates ATP. ADP-binding positions include 22–26 (RGVVR) and 55–60 (RYSVSD). ATP-binding positions include 73 to 74 (RF) and 103 to 106 (GDGS). Position 104 (Asp-104) interacts with Mg(2+). A substrate-binding site is contributed by 126 to 128 (TID). Residue Asp-128 is the Proton acceptor of the active site. Arg-155 provides a ligand contact to ADP. Substrate contacts are provided by residues Arg-163 and 170–172 (MGR). ADP contacts are provided by residues 186–188 (GCE), Lys-212, and 214–216 (KKH). Substrate-binding positions include Glu-223, Arg-244, and 250-253 (HIQR).

This sequence belongs to the phosphofructokinase type A (PFKA) family. ATP-dependent PFK group I subfamily. Prokaryotic clade 'B1' sub-subfamily. Homotetramer. Mg(2+) is required as a cofactor.

The protein localises to the cytoplasm. The enzyme catalyses beta-D-fructose 6-phosphate + ATP = beta-D-fructose 1,6-bisphosphate + ADP + H(+). Its pathway is carbohydrate degradation; glycolysis; D-glyceraldehyde 3-phosphate and glycerone phosphate from D-glucose: step 3/4. With respect to regulation, allosterically activated by ADP and other diphosphonucleosides, and allosterically inhibited by phosphoenolpyruvate. Functionally, catalyzes the phosphorylation of D-fructose 6-phosphate to fructose 1,6-bisphosphate by ATP, the first committing step of glycolysis. This chain is ATP-dependent 6-phosphofructokinase, found in Citrobacter koseri (strain ATCC BAA-895 / CDC 4225-83 / SGSC4696).